Here is a 338-residue protein sequence, read N- to C-terminus: Lipoate-protein ligase A (338 aa).

The BPL/LPL catalytic domain maps to 29-216 (PATQRVLFLW…AFFAHYGERV (188 aa)). ATP is bound by residues Arg-71, 76–79 (GAVF), and Lys-134. Lys-134 is a (R)-lipoate binding site.

This sequence belongs to the LplA family. Monomer.

It localises to the cytoplasm. The enzyme catalyses L-lysyl-[lipoyl-carrier protein] + (R)-lipoate + ATP = N(6)-[(R)-lipoyl]-L-lysyl-[lipoyl-carrier protein] + AMP + diphosphate + H(+). It functions in the pathway protein modification; protein lipoylation via exogenous pathway; protein N(6)-(lipoyl)lysine from lipoate: step 1/2. The protein operates within protein modification; protein lipoylation via exogenous pathway; protein N(6)-(lipoyl)lysine from lipoate: step 2/2. In terms of biological role, catalyzes both the ATP-dependent activation of exogenously supplied lipoate to lipoyl-AMP and the transfer of the activated lipoyl onto the lipoyl domains of lipoate-dependent enzymes. This is Lipoate-protein ligase A from Escherichia coli O8 (strain IAI1).